The primary structure comprises 150 residues: 3-dehydroquinate dehydratase (150 aa).

Y26 acts as the Proton acceptor in catalysis. Residues N77, H83, and D90 each contribute to the substrate site. H103 serves as the catalytic Proton donor. Substrate contacts are provided by residues 104–105 and R114; that span reads LS.

Belongs to the type-II 3-dehydroquinase family. As to quaternary structure, homododecamer.

The enzyme catalyses 3-dehydroquinate = 3-dehydroshikimate + H2O. It participates in metabolic intermediate biosynthesis; chorismate biosynthesis; chorismate from D-erythrose 4-phosphate and phosphoenolpyruvate: step 3/7. Functionally, catalyzes a trans-dehydration via an enolate intermediate. This chain is 3-dehydroquinate dehydratase, found in Enterobacter sp. (strain 638).